Reading from the N-terminus, the 298-residue chain is ATP synthase gamma chain (298 aa).

The protein belongs to the ATPase gamma chain family. As to quaternary structure, F-type ATPases have 2 components, CF(1) - the catalytic core - and CF(0) - the membrane proton channel. CF(1) has five subunits: alpha(3), beta(3), gamma(1), delta(1), epsilon(1). CF(0) has three main subunits: a, b and c.

It is found in the cell inner membrane. Produces ATP from ADP in the presence of a proton gradient across the membrane. The gamma chain is believed to be important in regulating ATPase activity and the flow of protons through the CF(0) complex. In Wolinella succinogenes (strain ATCC 29543 / DSM 1740 / CCUG 13145 / JCM 31913 / LMG 7466 / NCTC 11488 / FDC 602W) (Vibrio succinogenes), this protein is ATP synthase gamma chain.